The primary structure comprises 367 residues: 3-dehydroquinate synthase (367 aa).

NAD(+) contacts are provided by residues aspartate 69 to lysine 74, glycine 103 to aspartate 107, threonine 127 to threonine 128, lysine 140, lysine 149, and threonine 167 to threonine 170. Zn(2+) contacts are provided by glutamate 182, histidine 245, and histidine 262.

This sequence belongs to the sugar phosphate cyclases superfamily. Dehydroquinate synthase family. The cofactor is Co(2+). Zn(2+) is required as a cofactor. Requires NAD(+) as cofactor.

The protein resides in the cytoplasm. It catalyses the reaction 7-phospho-2-dehydro-3-deoxy-D-arabino-heptonate = 3-dehydroquinate + phosphate. It functions in the pathway metabolic intermediate biosynthesis; chorismate biosynthesis; chorismate from D-erythrose 4-phosphate and phosphoenolpyruvate: step 2/7. In terms of biological role, catalyzes the conversion of 3-deoxy-D-arabino-heptulosonate 7-phosphate (DAHP) to dehydroquinate (DHQ). This is 3-dehydroquinate synthase from Stutzerimonas stutzeri (strain A1501) (Pseudomonas stutzeri).